The sequence spans 212 residues: Spore germination lipase LipC (212 aa).

Residue S11 is the Nucleophile of the active site. Positions 50 and 82 each coordinate substrate. Catalysis depends on residues D186 and H189.

Belongs to the 'GDSL' lipolytic enzyme family.

It localises to the spore coat. In terms of biological role, lipase involved in spore germination. The sequence is that of Spore germination lipase LipC (lipC) from Bacillus licheniformis (strain ATCC 14580 / DSM 13 / JCM 2505 / CCUG 7422 / NBRC 12200 / NCIMB 9375 / NCTC 10341 / NRRL NRS-1264 / Gibson 46).